The primary structure comprises 182 residues: Helofensin-3 (182 aa).

Positions 1–26 (MQMDWLFIAVISGIGLLSSGVPGTQG) are cleaved as a signal peptide. The stretch at 27–64 (AYTTEQCRALNGSCNFYACFPKNVIIGKCDWWGWSCCA) is one C(6)C(4)C(9)C(6)CC 1; approximate repeat. The stretch at 65–101 (RTPLERCTAKKGTCTKTGCTKTDTDHGPCDGGAQCCQ) is one C(6)C(4)C(9)C(6)CC 2; approximate repeat. The stretch at 102-138 (RDPVKYCKFHGNVCGRGKCPMDHIPIGECTPGYPCCK) is one C(6)C(4)C(9)C(6)CC 3; approximate repeat. Residues 139–176 (RDGPAYCKSKGGKCLNRCPQIVPTNVIGVCATGVPCCK) form a C(6)C(4)C(9)C(6)CC 4; approximate repeat.

The protein belongs to the beta-defensin family. Helofensin subfamily. As to expression, expressed by the mandibular venom gland.

The protein localises to the secreted. In terms of biological role, lethal toxin which possesses an inhibitory effect on direct electrical stimulation of the isolated hemi-diaphragm of mice. Neither hemorrhagic nor hemolytic activities are detected. Phospholipase A2 activity, proteolytic activity and arginine esterolytic activity are absent. This is Helofensin-3 from Heloderma suspectum cinctum (Banded Gila monster).